Here is a 426-residue protein sequence, read N- to C-terminus: Gamma-glutamyl phosphate reductase (426 aa).

It belongs to the gamma-glutamyl phosphate reductase family.

The protein localises to the cytoplasm. It catalyses the reaction L-glutamate 5-semialdehyde + phosphate + NADP(+) = L-glutamyl 5-phosphate + NADPH + H(+). It functions in the pathway amino-acid biosynthesis; L-proline biosynthesis; L-glutamate 5-semialdehyde from L-glutamate: step 2/2. Catalyzes the NADPH-dependent reduction of L-glutamate 5-phosphate into L-glutamate 5-semialdehyde and phosphate. The product spontaneously undergoes cyclization to form 1-pyrroline-5-carboxylate. The sequence is that of Gamma-glutamyl phosphate reductase from Nitrobacter winogradskyi (strain ATCC 25391 / DSM 10237 / CIP 104748 / NCIMB 11846 / Nb-255).